The primary structure comprises 1113 residues: Atrial natriuretic peptide-converting enzyme (1113 aa).

At 1 to 112 (MGRVSFSVRV…QKLVTANLLR (112 aa)) the chain is on the cytoplasmic side. The chain crosses the membrane as a helical; Signal-anchor for type II membrane protein span at residues 113–133 (FLLLVLIPCICALIVLLAILL). Over 134-1113 (SFVGTLKRVY…QTFLQKKSQG (980 aa)) the chain is Extracellular. Residues Asn-147, Asn-202, and Asn-208 are each glycosylated (N-linked (GlcNAc...) asparagine). Positions 176 to 202 (APSLPPSQSTPAWTPRAPSPEDQSHRN) are disordered. Positions 201–327 (RNTSTCMNIT…SSVRKSCFSL (127 aa)) constitute an FZ 1 domain. Disulfide bonds link Cys-206–Cys-266, Cys-214–Cys-259, Cys-250–Cys-290, Cys-279–Cys-324, Cys-283–Cys-307, Cys-337–Cys-350, Cys-345–Cys-363, and Cys-357–Cys-372. N-linked (GlcNAc...) asparagine glycans are attached at residues Asn-298 and Asn-317. LDL-receptor class A domains are found at residues 336–372 (LCGG…EAHC), 373–408 (NCSK…EQNC), 409–445 (DCNL…EVNC), and 446–483 (SCHS…ENCS). N-linked (GlcNAc...) asparagine glycosylation occurs at Asn-373. 9 disulfides stabilise this stretch: Cys-374-Cys-386, Cys-381-Cys-399, Cys-393-Cys-408, Cys-410-Cys-423, Cys-418-Cys-436, Cys-430-Cys-445, Cys-447-Cys-460, Cys-455-Cys-473, and Cys-467-Cys-482. N-linked (GlcNAc...) asparagine glycosylation occurs at Asn-411. A glycan (N-linked (GlcNAc...) asparagine) is linked at Asn-444. Asn-481, Asn-519, and Asn-537 each carry an N-linked (GlcNAc...) asparagine glycan. Positions 518–641 (SNCSQCEPIT…SSDNQTCLLP (124 aa)) constitute an FZ 2 domain. Intrachain disulfides connect Cys-523/Cys-586, Cys-531/Cys-579, Cys-570/Cys-608, Cys-597/Cys-638, Cys-601/Cys-625, Cys-648/Cys-660, Cys-655/Cys-673, Cys-667/Cys-682, Cys-684/Cys-698, Cys-692/Cys-711, Cys-705/Cys-720, Cys-723/Cys-735, Cys-730/Cys-748, and Cys-742/Cys-757. Residue Asn-635 is glycosylated (N-linked (GlcNAc...) asparagine). 3 consecutive LDL-receptor class A domains span residues 647–682 (ECSP…EENC), 683–721 (GCKE…KNCS), and 722–757 (FCQD…EWGC). N-linked (GlcNAc...) asparagine glycosylation occurs at Asn-719. The region spanning 758–853 (VTLSKNGNSS…SRSEISLLCS (96 aa)) is the SRCR domain. N-linked (GlcNAc...) asparagine glycans are attached at residues Asn-765 and Asn-828. 6 disulfide bridges follow: Cys-782–Cys-884, Cys-857–Cys-979, Cys-895–Cys-911, Cys-993–Cys-1058, Cys-1022–Cys-1037, and Cys-1048–Cys-1077. One can recognise a Peptidase S1 domain in the interval 869–1102 (ILGGRTSRPG…FVGWIERQIY (234 aa)). Residues His-910 and Asp-959 each act as charge relay system in the active site. An N-linked (GlcNAc...) asparagine glycan is attached at Asn-970. Ser-1052 acts as the Charge relay system in catalysis. The N-linked (GlcNAc...) asparagine glycan is linked to Asn-1089.

Belongs to the peptidase S1 family. In terms of processing, N-glycosylated; required for processing and activation. Activated through proteolytic processing by a trypsin-like protease; cleaved into a N-terminal propeptide and an activated corin protease fragment. Atrial natriuretic peptide-converting enzyme, 180 kDa soluble fragment is produced by cleavage by ADAM10. Cleavage by ADAM10 to produce soluble 180 kDa soluble fragment takes place after the transmembrane region and before FZ 1. Post-translationally, a disulfide bond links the activated corin protease fragment and the N-terminal propeptide. The disulfide bond also links the activated corin protease fragment with Atrial natriuretic peptide-converting enzyme, 180 kDa soluble fragment. In terms of tissue distribution, highly expressed in heart. Also expressed in pregnant uterus.

It localises to the cell membrane. Its subcellular location is the secreted. In terms of biological role, serine-type endopeptidase involved in atrial natriuretic peptide (NPPA) processing. Converts through proteolytic cleavage the non-functional propeptide NPPA into the active hormone, thereby regulating blood pressure in heart and promoting natriuresis, diuresis and vasodilation. Proteolytic cleavage of pro-NPPA also plays a role in female pregnancy by promoting trophoblast invasion and spiral artery remodeling in uterus. Also acts as a regulator of sodium reabsorption in kidney. May also process pro-NPPB the B-type natriuretic peptide. In Mus musculus (Mouse), this protein is Atrial natriuretic peptide-converting enzyme (Corin).